Here is a 566-residue protein sequence, read N- to C-terminus: Tissue-type plasminogen activator (566 aa).

An N-terminal signal peptide occupies residues 1–21; sequence MMSAMKTEFLCVLLLCGAVFT. The propeptide occupies 22–33; it reads SPSQETYRRLRR. Positions 34 to 36 are cleaved as a propeptide — removed by plasmin; the sequence is GAR. Residues 40-82 form the Fibronectin type-I domain; the sequence is VTCRDGKTQMTYRQHDSWLRPLLRGNQVEHCWCDGGRAQCHSV. 17 disulfide bridges follow: cysteine 42-cysteine 72, cysteine 70-cysteine 79, cysteine 87-cysteine 98, cysteine 92-cysteine 109, cysteine 111-cysteine 120, cysteine 128-cysteine 209, cysteine 149-cysteine 191, cysteine 180-cysteine 204, cysteine 219-cysteine 300, cysteine 240-cysteine 282, cysteine 271-cysteine 295, cysteine 303-cysteine 434, cysteine 346-cysteine 362, cysteine 354-cysteine 423, cysteine 448-cysteine 523, cysteine 480-cysteine 496, and cysteine 513-cysteine 541. The segment at 43 to 53 is important for binding to annexin A2; the sequence is RDGKTQMTYRQ. Positions 83–121 constitute an EGF-like domain; sequence PVRSCSEPWCFNGGTCRQALYSSDFVCQCPEGFMGKLCE. Kringle domains follow at residues 128–209 and 219–300; these read CYKD…TPAC and CYTG…VPQC. The N-linked (GlcNAc...) asparagine glycan is linked to asparagine 153. In terms of domain architecture, Peptidase S1 spans 315-565; it reads IKGGLFADIT…YLDWIRDNTR (251 aa). Residues histidine 361 and aspartate 410 each act as charge relay system in the active site. A glycan (N-linked (GlcNAc...) asparagine) is linked at asparagine 487. Serine 517 functions as the Charge relay system in the catalytic mechanism.

This sequence belongs to the peptidase S1 family. As to quaternary structure, heterodimer of chain A and chain B held by a disulfide bond. Binds to fibrin with high affinity. This interaction leads to an increase in the catalytic efficiency of the enzyme due to an increase in affinity for plasminogen. Similarly, binding to heparin increases the activation of plasminogen. Binds to annexin A2, cytokeratin-8, fibronectin and laminin. Binds to mannose receptor and the low-density lipoprotein receptor-related protein (LRP1); these proteins are involved in TPA clearance. Binds LRP1B; binding is followed by internalization and degradation. Forms heterodimer with SERPINA5. Interacts with SERPINE1. In complex with SERPINE1, interacts with SORL1. Post-translationally, the single chain, almost fully active enzyme, can be further processed into a two-chain fully active form by a cleavage after Arg-314 catalyzed by plasmin, tissue kallikrein or factor Xa.

It localises to the secreted. The protein localises to the extracellular space. It catalyses the reaction Specific cleavage of Arg-|-Val bond in plasminogen to form plasmin.. With respect to regulation, inhibited by SERPINA5. Inhibited by SERPINE1. Functionally, converts the abundant, but inactive, zymogen plasminogen to plasmin by hydrolyzing a single Arg-Val bond in plasminogen. By controlling plasmin-mediated proteolysis, it plays an important role in tissue remodeling and degradation, in cell migration and many other physiopathological events. During oocyte activation, plays a role in cortical granule reaction in the zona reaction, which contributes to the block to polyspermy. The sequence is that of Tissue-type plasminogen activator (PLAT) from Bos taurus (Bovine).